We begin with the raw amino-acid sequence, 104 residues long: Replication restart protein PriB (104 aa).

One can recognise an SSB domain in the interval 1-101 (MTNRLVLSGT…LHAEQIELID (101 aa)).

It belongs to the PriB family. Homodimer. Interacts with PriA and DnaT. Component of the replication restart primosome. Primosome assembly occurs via a 'hand-off' mechanism. PriA binds to replication forks, subsequently PriB then DnaT bind; DnaT then displaces ssDNA to generate the helicase loading substrate.

In terms of biological role, involved in the restart of stalled replication forks, which reloads the replicative helicase on sites other than the origin of replication; the PriA-PriB pathway is the major replication restart pathway. During primosome assembly it facilitates complex formation between PriA and DnaT on DNA; stabilizes PriA on DNA. Stimulates the DNA unwinding activity of PriA helicase. This chain is Replication restart protein PriB, found in Escherichia coli (strain ATCC 8739 / DSM 1576 / NBRC 3972 / NCIMB 8545 / WDCM 00012 / Crooks).